The sequence spans 1191 residues: Probable inositol polyphosphate 5-phosphatase C9G1.10c (1191 aa).

Composition is skewed to polar residues over residues 1–10 (MASRQGFSNV), 72–101 (QVSSTIGSSTGRKVSGSIQRLASNFKNPSN), 114–135 (SDSSESHVATPSSPTISNSFVS), 151–161 (SFQSSVQSTKG), and 181–193 (NFSSKAGSSSPIS). Residues 1–193 (MASRQGFSNV…SKAGSSSPIS (193 aa)) form a disordered region. Position 195 is a phosphoserine (Ser195). Disordered regions lie at residues 205–281 (SQSP…PQPV), 294–334 (SQQL…DASL), and 355–425 (IPEK…SSSS). Over residues 268–280 (TPPPIPSPRPPQP) the composition is skewed to pro residues. Residues 302–311 (SPRKPPKPPL) show a composition bias toward basic residues. Polar residues-rich tracts occupy residues 316–334 (TQRSSSPIENLATKSDASL), 367–382 (HTLSELSSPALTSENL), and 400–413 (LATNKPVSMPVSTE). Positions 414–425 (QSDPSVAASSSS) are enriched in low complexity.

The protein belongs to the inositol 1,4,5-trisphosphate 5-phosphatase family.

The protein localises to the cytoplasm. The chain is Probable inositol polyphosphate 5-phosphatase C9G1.10c from Schizosaccharomyces pombe (strain 972 / ATCC 24843) (Fission yeast).